The sequence spans 414 residues: NADH-quinone oxidoreductase subunit D (414 aa).

The protein belongs to the complex I 49 kDa subunit family. As to quaternary structure, NDH-1 is composed of 14 different subunits. Subunits NuoB, C, D, E, F, and G constitute the peripheral sector of the complex.

Its subcellular location is the cell inner membrane. The catalysed reaction is a quinone + NADH + 5 H(+)(in) = a quinol + NAD(+) + 4 H(+)(out). Functionally, NDH-1 shuttles electrons from NADH, via FMN and iron-sulfur (Fe-S) centers, to quinones in the respiratory chain. The immediate electron acceptor for the enzyme in this species is believed to be ubiquinone. Couples the redox reaction to proton translocation (for every two electrons transferred, four hydrogen ions are translocated across the cytoplasmic membrane), and thus conserves the redox energy in a proton gradient. The chain is NADH-quinone oxidoreductase subunit D from Akkermansia muciniphila (strain ATCC BAA-835 / DSM 22959 / JCM 33894 / BCRC 81048 / CCUG 64013 / CIP 107961 / Muc).